A 434-amino-acid chain; its full sequence is UPF0597 protein CLK_1462 (434 aa).

It belongs to the UPF0597 family.

The polypeptide is UPF0597 protein CLK_1462 (Clostridium botulinum (strain Loch Maree / Type A3)).